The primary structure comprises 290 residues: Bifunctional protein FolD 1 (290 aa).

Residues 172–174 and isoleucine 238 each bind NADP(+); that span reads GAS.

Belongs to the tetrahydrofolate dehydrogenase/cyclohydrolase family. In terms of assembly, homodimer.

The enzyme catalyses (6R)-5,10-methylene-5,6,7,8-tetrahydrofolate + NADP(+) = (6R)-5,10-methenyltetrahydrofolate + NADPH. The catalysed reaction is (6R)-5,10-methenyltetrahydrofolate + H2O = (6R)-10-formyltetrahydrofolate + H(+). It functions in the pathway one-carbon metabolism; tetrahydrofolate interconversion. Catalyzes the oxidation of 5,10-methylenetetrahydrofolate to 5,10-methenyltetrahydrofolate and then the hydrolysis of 5,10-methenyltetrahydrofolate to 10-formyltetrahydrofolate. In Pseudomonas putida (strain GB-1), this protein is Bifunctional protein FolD 1.